Consider the following 420-residue polypeptide: UDP-N-acetylglucosamine 1-carboxyvinyltransferase (420 aa).

22 to 23 contributes to the phosphoenolpyruvate binding site; it reads KN. UDP-N-acetyl-alpha-D-glucosamine is bound at residue R95. The active-site Proton donor is the C119. Residue C119 is modified to 2-(S-cysteinyl)pyruvic acid O-phosphothioketal. UDP-N-acetyl-alpha-D-glucosamine is bound by residues 124 to 128, D307, and I329; that span reads RPIDQ.

This sequence belongs to the EPSP synthase family. MurA subfamily.

Its subcellular location is the cytoplasm. The catalysed reaction is phosphoenolpyruvate + UDP-N-acetyl-alpha-D-glucosamine = UDP-N-acetyl-3-O-(1-carboxyvinyl)-alpha-D-glucosamine + phosphate. It participates in cell wall biogenesis; peptidoglycan biosynthesis. Functionally, cell wall formation. Adds enolpyruvyl to UDP-N-acetylglucosamine. This Myxococcus xanthus (strain DK1622) protein is UDP-N-acetylglucosamine 1-carboxyvinyltransferase.